Here is a 320-residue protein sequence, read N- to C-terminus: Beta-carotene 3-hydroxylase, chloroplastic (320 aa).

Residues 1–78 constitute a chloroplast transit peptide; that stretch reads METQFLVSGR…EKELRGKLVV (78 aa). 2 helical membrane passes run 118–138 and 152–172; these read YLVAAVMSSFGITSMAVLSVY and LSEMFGTFALSVGAAVGMEFW. The Fatty acid hydroxylase domain maps to 165-292; the sequence is AAVGMEFWAR…KFNGVPYGLF (128 aa). Positions 177–182 match the Histidine box-1 motif; that stretch reads HEALWH. Residues 189 to 193 carry the Histidine box-2 motif; it reads HESHH. The next 2 helical transmembrane spans lie at 204–224 and 228–248; these read DIFAIINAVPAIALLSYGFFH and IPGLCFGAGLGITVFGMAYMF. The Histidine box-3 motif lies at 250 to 255; that stretch reads HDGLVH. The Histidine box-4 motif lies at 276–280; it reads HTLHH.

Belongs to the sterol desaturase family.

The protein resides in the plastid. It is found in the chloroplast membrane. The catalysed reaction is all-trans-beta-carotene + 4 reduced [2Fe-2S]-[ferredoxin] + 2 O2 + 4 H(+) = all-trans-zeaxanthin + 4 oxidized [2Fe-2S]-[ferredoxin] + 2 H2O. Nonheme diiron monooxygenase involved in the biosynthesis of xanthophylls. Specific for beta-ring hydroxylations of beta-carotene. Uses ferredoxin as an electron donor. This chain is Beta-carotene 3-hydroxylase, chloroplastic (BHY), found in Gentiana lutea (Yellow gentian).